The following is a 926-amino-acid chain: Storkhead-box protein 2 (926 aa).

7 disordered regions span residues 1–32, 338–391, 452–529, 564–588, 632–672, 724–803, and 825–926; these read MKKT…RSEK, EEEK…HLDI, EMPF…SYID, KEPS…YGEL, GVKK…GGVA, LKSH…GTMQ, and LAPK…VTSV. The span at 18 to 32 shows a compositional bias: basic and acidic residues; that stretch reads FSDRASDRMRSRSEK. Residues 353–378 are compositionally biased toward basic residues; that stretch reads HSGRSKKSRTHRKSHGKSRSHSKTRV. The segment covering 379 to 391 has biased composition (basic and acidic residues); sequence SKGDPSDGSHLDI. Residues 463–472 show a composition bias toward basic residues; the sequence is SHSKVHRSHS. Residues 473-495 are compositionally biased toward basic and acidic residues; it reads HTQDRRSRNERSNKAKERSRSMD. Residues 518-529 are compositionally biased toward polar residues; that stretch reads QDDQTPSQSYID. Residues 632–658 are compositionally biased toward basic and acidic residues; sequence GVKKLSPSDRQVPHSSREPVGHKEESP. Residues 746 to 769 show a composition bias toward polar residues; sequence LGTSAAQAMPASQRQQESGGNQEA. The span at 785–799 shows a compositional bias: basic and acidic residues; that stretch reads GANKNTEEEKNREDV. Polar residues-rich tracts occupy residues 847–884 and 914–926; these read MDSS…QNPA and KPSN…VTSV.

The sequence is that of Storkhead-box protein 2 (STOX2) from Homo sapiens (Human).